Consider the following 362-residue polypeptide: sn-glycerol-3-phosphate import ATP-binding protein UgpC (362 aa).

The ABC transporter domain occupies 4-235; that stretch reads LKLQAVTKSY…PATLFVASFI (232 aa). Position 37–44 (37–44) interacts with ATP; sequence GPSGCGKS.

This sequence belongs to the ABC transporter superfamily. sn-glycerol-3-phosphate importer (TC 3.A.1.1.3) family. In terms of assembly, the complex is composed of two ATP-binding proteins (UgpC), two transmembrane proteins (UgpA and UgpE) and a solute-binding protein (UgpB).

Its subcellular location is the cell inner membrane. The catalysed reaction is sn-glycerol 3-phosphate(out) + ATP + H2O = sn-glycerol 3-phosphate(in) + ADP + phosphate + H(+). Its function is as follows. Part of the ABC transporter complex UgpBAEC involved in sn-glycerol-3-phosphate (G3P) import. Responsible for energy coupling to the transport system. In Yersinia enterocolitica serotype O:8 / biotype 1B (strain NCTC 13174 / 8081), this protein is sn-glycerol-3-phosphate import ATP-binding protein UgpC.